Reading from the N-terminus, the 226-residue chain is NADH-ubiquinone oxidoreductase chain 6 (226 aa).

A run of 5 helical transmembrane segments spans residues 2–22, 28–48, 56–76, 90–110, and 169–189; these read STLG…LVIL, IYSI…LLTV, IYIL…VMMI, YNIY…ILIT, and IWFI…IYIT.

It belongs to the complex I subunit 6 family.

The protein resides in the mitochondrion membrane. It catalyses the reaction a ubiquinone + NADH + 5 H(+)(in) = a ubiquinol + NAD(+) + 4 H(+)(out). In terms of biological role, core subunit of the mitochondrial membrane respiratory chain NADH dehydrogenase (Complex I) that is believed to belong to the minimal assembly required for catalysis. Complex I functions in the transfer of electrons from NADH to the respiratory chain. The immediate electron acceptor for the enzyme is believed to be ubiquinone. This is NADH-ubiquinone oxidoreductase chain 6 (nad6) from Dictyostelium discoideum (Social amoeba).